The following is a 491-amino-acid chain: Ketol-acid reductoisomerase (NADP(+)) (491 aa).

A KARI N-terminal Rossmann domain is found at A15–S208. NADP(+)-binding positions include C45–Q48, R68, R76, S78, and D108–Q110. H132 is an active-site residue. G158 lines the NADP(+) pocket. 2 KARI C-terminal knotted domains span residues S209–Q344 and Y345–M484. Residues D217, E221, E389, and E393 each contribute to the Mg(2+) site. S414 is a binding site for substrate.

The protein belongs to the ketol-acid reductoisomerase family. It depends on Mg(2+) as a cofactor.

The catalysed reaction is (2R)-2,3-dihydroxy-3-methylbutanoate + NADP(+) = (2S)-2-acetolactate + NADPH + H(+). It catalyses the reaction (2R,3R)-2,3-dihydroxy-3-methylpentanoate + NADP(+) = (S)-2-ethyl-2-hydroxy-3-oxobutanoate + NADPH + H(+). Its pathway is amino-acid biosynthesis; L-isoleucine biosynthesis; L-isoleucine from 2-oxobutanoate: step 2/4. It participates in amino-acid biosynthesis; L-valine biosynthesis; L-valine from pyruvate: step 2/4. Functionally, involved in the biosynthesis of branched-chain amino acids (BCAA). Catalyzes an alkyl-migration followed by a ketol-acid reduction of (S)-2-acetolactate (S2AL) to yield (R)-2,3-dihydroxy-isovalerate. In the isomerase reaction, S2AL is rearranged via a Mg-dependent methyl migration to produce 3-hydroxy-3-methyl-2-ketobutyrate (HMKB). In the reductase reaction, this 2-ketoacid undergoes a metal-dependent reduction by NADPH to yield (R)-2,3-dihydroxy-isovalerate. The sequence is that of Ketol-acid reductoisomerase (NADP(+)) from Salmonella arizonae (strain ATCC BAA-731 / CDC346-86 / RSK2980).